We begin with the raw amino-acid sequence, 174 residues long: ATP synthase subunit delta (174 aa).

It belongs to the ATPase delta chain family. F-type ATPases have 2 components, F(1) - the catalytic core - and F(0) - the membrane proton channel. F(1) has five subunits: alpha(3), beta(3), gamma(1), delta(1), epsilon(1). F(0) has three main subunits: a(1), b(2) and c(10-14). The alpha and beta chains form an alternating ring which encloses part of the gamma chain. F(1) is attached to F(0) by a central stalk formed by the gamma and epsilon chains, while a peripheral stalk is formed by the delta and b chains.

Its subcellular location is the cell inner membrane. In terms of biological role, f(1)F(0) ATP synthase produces ATP from ADP in the presence of a proton or sodium gradient. F-type ATPases consist of two structural domains, F(1) containing the extramembraneous catalytic core and F(0) containing the membrane proton channel, linked together by a central stalk and a peripheral stalk. During catalysis, ATP synthesis in the catalytic domain of F(1) is coupled via a rotary mechanism of the central stalk subunits to proton translocation. Its function is as follows. This protein is part of the stalk that links CF(0) to CF(1). It either transmits conformational changes from CF(0) to CF(1) or is implicated in proton conduction. This Neorickettsia sennetsu (strain ATCC VR-367 / Miyayama) (Ehrlichia sennetsu) protein is ATP synthase subunit delta.